We begin with the raw amino-acid sequence, 42 residues long: YVSCLFRGARCRVYSGRSCCFGYYCRRDFPGSIFGTCSRRNF.

Disulfide bonds link Cys-4/Cys-20, Cys-11/Cys-25, and Cys-19/Cys-37.

As to expression, granular hemocytes, small secretory granules.

The protein localises to the secreted. In terms of biological role, exhibits stronger antimicrobial activity against the Gram-positive bacteria (S.aureus (IC(50) is 7.4 ug/ml)) and fungi (C.albicans (IC(50) is 3.0 ug/ml) and P.pastoris (IC(50) is 0.1 ug/ml)) than Gram-negative bacteria (E.coli no inhibition at 100 ug/ml). Binds to chitin (4.3 uM are required to obtain 50% of binding). Does not cause hemolysis on sheep erythrocytes. Has no blocking activity on the P-type calcium channel. This Tachypleus tridentatus (Japanese horseshoe crab) protein is Tachystatin-B1.